Reading from the N-terminus, the 217-residue chain is Probable lipoprotein CPn_0875/CP_0994/CPj0875/CpB0904 (217 aa).

The first 21 residues, 1–21, serve as a signal peptide directing secretion; that stretch reads MKRVIYKTIFCGLTLLTSLSS. The N-palmitoyl cysteine moiety is linked to residue Cys-22. Residue Cys-22 is the site of S-diacylglycerol cysteine attachment.

The protein belongs to the chlamydial CPn_0875/CT_734/TC_0107 family.

Its subcellular location is the cell membrane. The polypeptide is Probable lipoprotein CPn_0875/CP_0994/CPj0875/CpB0904 (Chlamydia pneumoniae (Chlamydophila pneumoniae)).